The chain runs to 610 residues: Chaperone protein DnaK (610 aa).

A Phosphothreonine; by autocatalysis modification is found at T173. Over residues 579–592 (QQQQAQGANAGQNN) the composition is skewed to low complexity. The interval 579-610 (QQQQAQGANAGQNNDSTVEDAEFKEVKDDDKK) is disordered. Basic and acidic residues predominate over residues 599–610 (AEFKEVKDDDKK).

Belongs to the heat shock protein 70 family.

In terms of biological role, acts as a chaperone. The chain is Chaperone protein DnaK from Staphylococcus aureus (strain bovine RF122 / ET3-1).